A 134-amino-acid polypeptide reads, in one-letter code: Retinol-binding protein 2 (134 aa).

All-trans-retinol contacts are provided by Lys41 and Gln109.

Belongs to the calycin superfamily. Fatty-acid binding protein (FABP) family. Expressed in prenatal liver, intestine and lung, and in adult intestine.

Its subcellular location is the cytoplasm. Functionally, intracellular transport of retinol. This Mus musculus (Mouse) protein is Retinol-binding protein 2 (Rbp2).